Reading from the N-terminus, the 361-residue chain is Biotin synthase (361 aa).

The 226-residue stretch at proline 83–arginine 308 folds into the Radical SAM core domain. 3 residues coordinate [4Fe-4S] cluster: cysteine 98, cysteine 102, and cysteine 105. Residues cysteine 141, cysteine 174, cysteine 233, and arginine 303 each coordinate [2Fe-2S] cluster.

The protein belongs to the radical SAM superfamily. Biotin synthase family. Homodimer. [4Fe-4S] cluster serves as cofactor. The cofactor is [2Fe-2S] cluster.

The enzyme catalyses (4R,5S)-dethiobiotin + (sulfur carrier)-SH + 2 reduced [2Fe-2S]-[ferredoxin] + 2 S-adenosyl-L-methionine = (sulfur carrier)-H + biotin + 2 5'-deoxyadenosine + 2 L-methionine + 2 oxidized [2Fe-2S]-[ferredoxin]. It functions in the pathway cofactor biosynthesis; biotin biosynthesis; biotin from 7,8-diaminononanoate: step 2/2. Its function is as follows. Catalyzes the conversion of dethiobiotin (DTB) to biotin by the insertion of a sulfur atom into dethiobiotin via a radical-based mechanism. The chain is Biotin synthase from Parafrankia sp. (strain EAN1pec).